Consider the following 360-residue polypeptide: Glutaminyl-peptide cyclotransferase (360 aa).

An N-terminal signal peptide occupies residues 1 to 23 (MKYLKILIIVTIFFFLLINVINC). The N-linked (GlcNAc...) asparagine glycan is linked to asparagine 135. Residue aspartate 165 coordinates Zn(2+). Glutamate 199 serves as the catalytic Proton acceptor. Glutamate 200 provides a ligand contact to Zn(2+). The active-site Proton acceptor is aspartate 251. Histidine 330 provides a ligand contact to Zn(2+).

This sequence belongs to the glutaminyl-peptide cyclotransferase family.

The protein resides in the secreted. It catalyses the reaction N-terminal L-glutaminyl-[peptide] = N-terminal 5-oxo-L-prolyl-[peptide] + NH4(+). Its function is as follows. Responsible for the biosynthesis of pyroglutamyl peptides. Has a bias against acidic and tryptophan residues adjacent to the N-terminal glutaminyl residue and a lack of importance of chain length after the second residue. Also catalyzes N-terminal pyroglutamate formation. The polypeptide is Glutaminyl-peptide cyclotransferase (qpct) (Dictyostelium discoideum (Social amoeba)).